The following is a 351-amino-acid chain: N-acetyl-gamma-glutamyl-phosphate reductase (351 aa).

The active site involves Cys154.

Belongs to the NAGSA dehydrogenase family. Type 1 subfamily.

It localises to the cytoplasm. The catalysed reaction is N-acetyl-L-glutamate 5-semialdehyde + phosphate + NADP(+) = N-acetyl-L-glutamyl 5-phosphate + NADPH + H(+). The protein operates within amino-acid biosynthesis; L-arginine biosynthesis; N(2)-acetyl-L-ornithine from L-glutamate: step 3/4. Functionally, catalyzes the NADPH-dependent reduction of N-acetyl-5-glutamyl phosphate to yield N-acetyl-L-glutamate 5-semialdehyde. The sequence is that of N-acetyl-gamma-glutamyl-phosphate reductase from Prochlorococcus marinus (strain MIT 9515).